The chain runs to 504 residues: ATP synthase subunit alpha, chloroplastic (504 aa).

Gly170–Thr177 provides a ligand contact to ATP.

The protein belongs to the ATPase alpha/beta chains family. F-type ATPases have 2 components, CF(1) - the catalytic core - and CF(0) - the membrane proton channel. CF(1) has five subunits: alpha(3), beta(3), gamma(1), delta(1), epsilon(1). CF(0) has four main subunits: a, b, b' and c.

It localises to the plastid. The protein localises to the chloroplast thylakoid membrane. The catalysed reaction is ATP + H2O + 4 H(+)(in) = ADP + phosphate + 5 H(+)(out). Produces ATP from ADP in the presence of a proton gradient across the membrane. The alpha chain is a regulatory subunit. The sequence is that of ATP synthase subunit alpha, chloroplastic from Ostreococcus tauri.